The chain runs to 158 residues: Troponin C, isoform 1 (158 aa).

Ser-1 carries the post-translational modification N-acetylserine. 4 consecutive EF-hand domains span residues 15 to 50 (EQIV…MGIK), 51 to 86 (VSST…FLIE), 91 to 126 (AMMK…LDAR), and 127 to 158 (LTAE…MMTG). The Ca(2+) site is built by Asp-64, Asp-66, Ser-68, Gln-70, and Glu-75. 5 residues coordinate Ca(2+): Asp-140, Asp-142, Ser-144, Thr-146, and Glu-151.

Belongs to the troponin C family.

Troponin is the central regulatory protein of striated muscle contraction. Tn consists of three components: Tn-I which is the inhibitor of actomyosin ATPase, Tn-T which contains the binding site for tropomyosin and Tn-C. The binding of calcium to Tn-C abolishes the inhibitory action of Tn on actin filaments. This is Troponin C, isoform 1 from Balanus nubilus (Giant acorn barnacle).